Consider the following 367-residue polypeptide: Putative methylthioribose-1-phosphate isomerase (367 aa).

Residues 65-67 (RGA), Arg-106, and Gln-218 contribute to the substrate site. The active-site Proton donor is the Asp-259. 269-270 (NK) lines the substrate pocket.

The protein belongs to the eIF-2B alpha/beta/delta subunits family. MtnA subfamily.

It carries out the reaction 5-(methylsulfanyl)-alpha-D-ribose 1-phosphate = 5-(methylsulfanyl)-D-ribulose 1-phosphate. In terms of biological role, catalyzes the interconversion of methylthioribose-1-phosphate (MTR-1-P) into methylthioribulose-1-phosphate (MTRu-1-P). The protein is Putative methylthioribose-1-phosphate isomerase of Sulfolobus acidocaldarius (strain ATCC 33909 / DSM 639 / JCM 8929 / NBRC 15157 / NCIMB 11770).